Reading from the N-terminus, the 159-residue chain is Cytochrome c-type biogenesis protein CcmE (159 aa).

The Cytoplasmic portion of the chain corresponds to 1–8 (MNLRRKNR). A helical; Signal-anchor for type II membrane protein membrane pass occupies residues 9–29 (LWVVCAVLAGLGLTTALVLYA). Residues 30–159 (LRANIDLFYT…PQRADKDTSS (130 aa)) lie on the Periplasmic side of the membrane. The tract at residues 129 to 159 (KHDENYTPPEVEKAMQENHRRPQRADKDTSS) is disordered. Heme is bound by residues His130 and Tyr134.

It belongs to the CcmE/CycJ family.

Its subcellular location is the cell inner membrane. In terms of biological role, heme chaperone required for the biogenesis of c-type cytochromes. Transiently binds heme delivered by CcmC and transfers the heme to apo-cytochromes in a process facilitated by CcmF and CcmH. This is Cytochrome c-type biogenesis protein CcmE from Salmonella typhimurium (strain LT2 / SGSC1412 / ATCC 700720).